A 247-amino-acid chain; its full sequence is Cytochrome c oxidase subunit 2 (247 aa).

The N-terminal stretch at 1-11 (MLLIINNIINN) is a signal peptide. The Mitochondrial intermembrane portion of the chain corresponds to 12 to 38 (DVPTPWGVYFQDSATPNHEGIIELHDN). A helical membrane pass occupies residues 39–59 (IMFYLVLILCLVSWLLFSIVK). Residues 60 to 78 (DGSKNPLPHKYLVHGQTIE) are Mitochondrial matrix-facing. Residues 79-101 (IIWTILPALVLLVIAFPSFILLY) form a helical membrane-spanning segment. The Mitochondrial intermembrane segment spans residues 102–247 (LCDEVISPAM…KEFLTWLNEQ (146 aa)). Positions 182, 217, 219, 221, 225, and 228 each coordinate Cu cation. Glu219 lines the Mg(2+) pocket.

Belongs to the cytochrome c oxidase subunit 2 family. Component of the cytochrome c oxidase (complex IV, CIV), a multisubunit enzyme composed of a catalytic core of 3 subunits and several supernumerary subunits. The complex exists as a monomer or a dimer and forms supercomplexes (SCs) in the inner mitochondrial membrane with ubiquinol-cytochrome c oxidoreductase (cytochrome b-c1 complex, complex III, CIII). Requires Cu cation as cofactor. In terms of processing, the signal sequence of COX2 is processed by IMP1.

It localises to the mitochondrion inner membrane. The enzyme catalyses 4 Fe(II)-[cytochrome c] + O2 + 8 H(+)(in) = 4 Fe(III)-[cytochrome c] + 2 H2O + 4 H(+)(out). Functionally, component of the cytochrome c oxidase, the last enzyme in the mitochondrial electron transport chain which drives oxidative phosphorylation. The respiratory chain contains 3 multisubunit complexes succinate dehydrogenase (complex II, CII), ubiquinol-cytochrome c oxidoreductase (cytochrome b-c1 complex, complex III, CIII) and cytochrome c oxidase (complex IV, CIV), that cooperate to transfer electrons derived from NADH and succinate to molecular oxygen, creating an electrochemical gradient over the inner membrane that drives transmembrane transport and the ATP synthase. Cytochrome c oxidase is the component of the respiratory chain that catalyzes the reduction of oxygen to water. Electrons originating from reduced cytochrome c in the intermembrane space (IMS) are transferred via the dinuclear copper A center (CU(A)) of subunit 2 and heme A of subunit 1 to the active site in subunit 1, a binuclear center (BNC) formed by heme A3 and copper B (CU(B)). The BNC reduces molecular oxygen to 2 water molecules using 4 electrons from cytochrome c in the IMS and 4 protons from the mitochondrial matrix. The sequence is that of Cytochrome c oxidase subunit 2 (COX2) from Wickerhamomyces canadensis (Yeast).